We begin with the raw amino-acid sequence, 109 residues long: DNA-binding protein Mpal_0536 (109 aa).

Residues 14-35 (MAQLQSQQMDQQQMDEEKQRAK) form a disordered region. Residues 16-25 (QLQSQQMDQQ) show a composition bias toward low complexity.

The protein belongs to the PDCD5 family.

This Methanosphaerula palustris (strain ATCC BAA-1556 / DSM 19958 / E1-9c) protein is DNA-binding protein Mpal_0536.